We begin with the raw amino-acid sequence, 359 residues long: Phosphate acyltransferase (359 aa).

It belongs to the PlsX family. In terms of assembly, homodimer. Probably interacts with PlsY.

The protein resides in the cytoplasm. It catalyses the reaction a fatty acyl-[ACP] + phosphate = an acyl phosphate + holo-[ACP]. Its pathway is lipid metabolism; phospholipid metabolism. Functionally, catalyzes the reversible formation of acyl-phosphate (acyl-PO(4)) from acyl-[acyl-carrier-protein] (acyl-ACP). This enzyme utilizes acyl-ACP as fatty acyl donor, but not acyl-CoA. This chain is Phosphate acyltransferase, found in Salmonella heidelberg (strain SL476).